The primary structure comprises 121 residues: Large ribosomal subunit protein bL12 (121 aa).

It belongs to the bacterial ribosomal protein bL12 family. Homodimer. Part of the ribosomal stalk of the 50S ribosomal subunit. Forms a multimeric L10(L12)X complex, where L10 forms an elongated spine to which 2 to 4 L12 dimers bind in a sequential fashion. Binds GTP-bound translation factors.

Forms part of the ribosomal stalk which helps the ribosome interact with GTP-bound translation factors. Is thus essential for accurate translation. The chain is Large ribosomal subunit protein bL12 from Streptococcus equi subsp. equi (strain 4047).